Reading from the N-terminus, the 137-residue chain is Large ribosomal subunit protein uL16 (137 aa).

This sequence belongs to the universal ribosomal protein uL16 family. In terms of assembly, part of the 50S ribosomal subunit.

Binds 23S rRNA and is also seen to make contacts with the A and possibly P site tRNAs. This Spiroplasma kunkelii protein is Large ribosomal subunit protein uL16.